The following is a 561-amino-acid chain: DNA mismatch repair protein MutL (561 aa).

The protein belongs to the DNA mismatch repair MutL/HexB family.

This protein is involved in the repair of mismatches in DNA. It is required for dam-dependent methyl-directed DNA mismatch repair. May act as a 'molecular matchmaker', a protein that promotes the formation of a stable complex between two or more DNA-binding proteins in an ATP-dependent manner without itself being part of a final effector complex. The sequence is that of DNA mismatch repair protein MutL from Rippkaea orientalis (strain PCC 8801 / RF-1) (Cyanothece sp. (strain PCC 8801)).